A 322-amino-acid chain; its full sequence is Large ribosomal subunit protein uL29m (322 aa).

The segment at 1–44 is disordered; it reads MLNVQRGLHTTVRLSARTKYTKPKPKPQARVIKSEPSQVTHHDN.

The protein belongs to the universal ribosomal protein uL29 family. In terms of assembly, component of the mitochondrial large ribosomal subunit. Mature mitochondrial ribosomes consist of a small (37S) and a large (54S) subunit. The 37S subunit contains at least 33 different proteins and 1 molecule of RNA (15S). The 54S subunit contains at least 45 different proteins and 1 molecule of RNA (21S).

It localises to the mitochondrion. In Vanderwaltozyma polyspora (strain ATCC 22028 / DSM 70294 / BCRC 21397 / CBS 2163 / NBRC 10782 / NRRL Y-8283 / UCD 57-17) (Kluyveromyces polysporus), this protein is Large ribosomal subunit protein uL29m (MRPL4).